A 158-amino-acid chain; its full sequence is SsrA-binding protein (158 aa).

It belongs to the SmpB family.

The protein localises to the cytoplasm. Its function is as follows. Required for rescue of stalled ribosomes mediated by trans-translation. Binds to transfer-messenger RNA (tmRNA), required for stable association of tmRNA with ribosomes. tmRNA and SmpB together mimic tRNA shape, replacing the anticodon stem-loop with SmpB. tmRNA is encoded by the ssrA gene; the 2 termini fold to resemble tRNA(Ala) and it encodes a 'tag peptide', a short internal open reading frame. During trans-translation Ala-aminoacylated tmRNA acts like a tRNA, entering the A-site of stalled ribosomes, displacing the stalled mRNA. The ribosome then switches to translate the ORF on the tmRNA; the nascent peptide is terminated with the 'tag peptide' encoded by the tmRNA and targeted for degradation. The ribosome is freed to recommence translation, which seems to be the essential function of trans-translation. In Bartonella henselae (strain ATCC 49882 / DSM 28221 / CCUG 30454 / Houston 1) (Rochalimaea henselae), this protein is SsrA-binding protein.